A 198-amino-acid chain; its full sequence is Heat shock 70 kDa protein (198 aa).

A compositionally biased stretch (gly residues) spans 170 to 191; sequence GGGVPSGMPGGMPGAGGGGGKG. A disordered region spans residues 170–198; that stretch reads GGGVPSGMPGGMPGAGGGGGKGPTIEEVD.

The protein belongs to the heat shock protein 70 family.

This Schistosoma japonicum (Blood fluke) protein is Heat shock 70 kDa protein.